A 320-amino-acid polypeptide reads, in one-letter code: Ferrochelatase (320 aa).

H194 and E275 together coordinate Fe cation.

It belongs to the ferrochelatase family. In terms of assembly, monomer.

It is found in the cytoplasm. The catalysed reaction is heme b + 2 H(+) = protoporphyrin IX + Fe(2+). The protein operates within porphyrin-containing compound metabolism; protoheme biosynthesis; protoheme from protoporphyrin-IX: step 1/1. Catalyzes the ferrous insertion into protoporphyrin IX. This Shigella boydii serotype 4 (strain Sb227) protein is Ferrochelatase.